The chain runs to 84 residues: Envelope glycoprotein N (84 aa).

The N-terminal stretch at 1-26 (MSCKKGARQRLYVSLWLFYILVFAAA) is a signal peptide. At 27-45 (TEMDFYSSECHSHTYEIVL) the chain is on the virion surface side. The chain crosses the membrane as a helical span at residues 46 to 66 (NSFSSIWLLINLFLLLCSFAI). The Intravirion segment spans residues 67–84 (FLKYWCYKTFASETVKGY).

The protein belongs to the herpesviridae glycoprotein N family. Interacts (via N-terminus) with gM (via N-terminus). The gM-gN heterodimer forms the gCII complex.

The protein resides in the virion membrane. Its subcellular location is the host membrane. The protein localises to the host Golgi apparatus. It localises to the host trans-Golgi network. Functionally, envelope glycoprotein necessary for proper maturation of gM and modulation of its membrane fusion activity. Also plays a critical role in virion morphogenesis. The chain is Envelope glycoprotein N from Human herpesvirus 6B (strain Z29) (HHV-6 variant B).